The chain runs to 415 residues: Serine hydroxymethyltransferase (415 aa).

Residues Leu119 and 123-125 each bind (6S)-5,6,7,8-tetrahydrofolate; that span reads GHL. Position 228 is an N6-(pyridoxal phosphate)lysine (Lys228). 353-355 contributes to the (6S)-5,6,7,8-tetrahydrofolate binding site; that stretch reads SAF.

This sequence belongs to the SHMT family. As to quaternary structure, homodimer. Requires pyridoxal 5'-phosphate as cofactor.

The protein localises to the cytoplasm. It carries out the reaction (6R)-5,10-methylene-5,6,7,8-tetrahydrofolate + glycine + H2O = (6S)-5,6,7,8-tetrahydrofolate + L-serine. It functions in the pathway one-carbon metabolism; tetrahydrofolate interconversion. It participates in amino-acid biosynthesis; glycine biosynthesis; glycine from L-serine: step 1/1. In terms of biological role, catalyzes the reversible interconversion of serine and glycine with tetrahydrofolate (THF) serving as the one-carbon carrier. Also exhibits THF-independent aldolase activity toward beta-hydroxyamino acids, producing glycine and aldehydes, via a retro-aldol mechanism. This chain is Serine hydroxymethyltransferase, found in Haloarcula marismortui (strain ATCC 43049 / DSM 3752 / JCM 8966 / VKM B-1809) (Halobacterium marismortui).